A 936-amino-acid chain; its full sequence is Aconitate hydratase A (936 aa).

Residues V401–T449 form a disordered region. Polar residues predominate over residues T412–T422. 3 residues coordinate [4Fe-4S] cluster: C472, C538, and C541.

This sequence belongs to the aconitase/IPM isomerase family. As to quaternary structure, monomer. The cofactor is [4Fe-4S] cluster.

The catalysed reaction is citrate = D-threo-isocitrate. The enzyme catalyses (2S,3R)-3-hydroxybutane-1,2,3-tricarboxylate = 2-methyl-cis-aconitate + H2O. The protein operates within carbohydrate metabolism; tricarboxylic acid cycle; isocitrate from oxaloacetate: step 2/2. Its pathway is organic acid metabolism; propanoate degradation. Its function is as follows. Involved in the catabolism of short chain fatty acids (SCFA) via the tricarboxylic acid (TCA)(acetyl degradation route) and probably via the 2-methylcitrate cycle I (propionate degradation route). Catalyzes the reversible isomerization of citrate to isocitrate via cis-aconitate. Could catalyze the hydration of 2-methyl-cis-aconitate to yield (2R,3S)-2-methylisocitrate. The apo form of AcnA functions as a RNA-binding regulatory protein. The protein is Aconitate hydratase A (acn) of Corynebacterium jeikeium (strain K411).